The chain runs to 177 residues: Ribonuclease alpha-sarcin (177 aa).

The N-terminal stretch at 1–27 (MVAIKNLVLVALTAVTALAVPSPLEAR) is a signal peptide. Intrachain disulfides connect Cys33-Cys175 and Cys103-Cys159. His77 is a catalytic residue. The tract at residues 86–119 (DGKLPKGRTPIKFGKSDCDRPPKHSKDGNGKTDH) is disordered. Residues 99–119 (GKSDCDRPPKHSKDGNGKTDH) are compositionally biased toward basic and acidic residues. The active-site Proton acceptor is Glu123. The active-site Proton donor is His164.

The protein belongs to the ribonuclease U2 family.

Its subcellular location is the secreted. It catalyses the reaction a 28S rRNA containing guanosine-adenosine pair + H2O = an [RNA fragment]-3'-adenosine-3'-phosphate + a 5'-a hydroxy-guanosine-3'-[RNA fragment].. In terms of biological role, alpha-sarcin is specific for purines in both single- and double-stranded RNA. Its toxic action on eukaryotic cells is the result of cleavage of a single phosphodiester bond in the 60S subunit of ribosomes. Inhibits both the EFl (elongation factor 1)-dependent binding of aminoacyl-tRNA and the GTP-dependent binding of EF2 (elongation factor 2) to ribosomes. In Aspergillus giganteus, this protein is Ribonuclease alpha-sarcin (sar).